The chain runs to 131 residues: Holo-[acyl-carrier-protein] synthase (131 aa).

Mg(2+) is bound by residues D8 and E59.

It belongs to the P-Pant transferase superfamily. AcpS family. Mg(2+) serves as cofactor.

Its subcellular location is the cytoplasm. It catalyses the reaction apo-[ACP] + CoA = holo-[ACP] + adenosine 3',5'-bisphosphate + H(+). Its function is as follows. Transfers the 4'-phosphopantetheine moiety from coenzyme A to a Ser of acyl-carrier-protein. The protein is Holo-[acyl-carrier-protein] synthase of Orientia tsutsugamushi (strain Boryong) (Rickettsia tsutsugamushi).